A 936-amino-acid chain; its full sequence is UPF0746 protein DDB_G0280787 (936 aa).

A compositionally biased stretch (basic and acidic residues) spans 1-19; sequence MISNKRKEIDTIDGHHEKD. Residues 1–30 form a disordered region; sequence MISNKRKEIDTIDGHHEKDNDDDDSDGIDN. The SAP domain maps to 44–78; that stretch reads SGSTNYRELQIIAKSLGLASNGKKQLVYNRIEGYF. The segment at 91–110 is disordered; the sequence is ETNQQEEKKEEEQQQPQPQE.

It belongs to the UPF0746 family.

In Dictyostelium discoideum (Social amoeba), this protein is UPF0746 protein DDB_G0280787.